A 269-amino-acid chain; its full sequence is MATVPELNCEMPPFDSDENDLFFEVDGPQKMKGCFQTFDLGCPDESIQLQISQQHINKSFRQAVSLIVAVEKLWQLPVSFPWTFQDEDMSTFFSFIFEEEPILCDSWDDDDNLLVCDVPIRQLHYRLRDEQQKSLVLSDPYELKALHLNGQNINQQVIFSMSFVQGEPSNDKIPVALGLKGKNLYLSCVMKDGTPTLQLESVDPKQYPKKKMEKRFVFNKIEVKSKVEFESAEFPNWYISTSQAEHKPVFLGNNSGQDIIDFTMESVSS.

A propeptide spanning residues 1-117 (MATVPELNCE…DDDDNLLVCD (117 aa)) is cleaved from the precursor.

It belongs to the IL-1 family. As to quaternary structure, monomer. Interacts with MEFV. Interacts with integrins ITGAV:ITGBV and ITGA5:ITGB1; integrin-binding is required for IL1B signaling. Interacts with cargo receptor TMED10; the interaction is direct and is required for the secretion of IL1B mature form. Interacts with HSP90AB1; the interaction facilitates cargo translocation into the ERGIC. Interacts with HSP90B1; the interaction facilitates cargo translocation into the ERGIC. In terms of tissue distribution, expressed in activated macrophages (at protein level).

The protein resides in the cytoplasm. Its subcellular location is the cytosol. It is found in the secreted. It localises to the lysosome. The protein localises to the extracellular exosome. Potent pro-inflammatory cytokine. Initially discovered as the major endogenous pyrogen, induces prostaglandin synthesis, neutrophil influx and activation, T-cell activation and cytokine production, B-cell activation and antibody production, and fibroblast proliferation and collagen production. Promotes Th17 differentiation of T-cells. Synergizes with IL12/interleukin-12 to induce IFNG synthesis from T-helper 1 (Th1) cells. Plays a role in angiogenesis by inducing VEGF production synergistically with TNF and IL6. Involved in transduction of inflammation downstream of pyroptosis: its mature form is specifically released in the extracellular milieu by passing through the gasdermin-D (GSDMD) pore. The polypeptide is Interleukin-1 beta (Il1b) (Mus musculus (Mouse)).